Consider the following 365-residue polypeptide: Outer capsid protein sigma-3 (365 aa).

The CCHC-type zinc-finger motif lies at 51–73 (CMHCLGVVGSLQRKLKHLPHHRC).

The protein belongs to the orthoreovirus sigma-3 protein family. Heterohexamer of three sigma-3 and three Mu-1 proteins. The RNA-binding form is probably a homodimer. Cleaved during virus the endosomal proteolytic disassembly of the outer capsid.

Its subcellular location is the virion. It is found in the host cytoplasm. The protein resides in the host nucleus. Its function is as follows. Stimulates translation by blocking the activation of the dsRNA-dependent protein kinase EIF2AK2/PKR, thereby inhibiting the host interferon response. Sigma3 prevents the activation of EIF2AK2 by competing with the kinase for dsRNA-binding. The viral outer shell polypeptides, of which sigma-3 is one, impose structural constraints that prevent elongation of nascent transcripts by the RNA-dependent RNA polymerase lambda-3. This chain is Outer capsid protein sigma-3 (S4), found in Reovirus type 3 (strain Dearing) (T3D).